Here is a 561-residue protein sequence, read N- to C-terminus: DNA ligase B (561 aa).

Lys125 functions as the N6-AMP-lysine intermediate in the catalytic mechanism.

The protein belongs to the NAD-dependent DNA ligase family. LigB subfamily.

It carries out the reaction NAD(+) + (deoxyribonucleotide)n-3'-hydroxyl + 5'-phospho-(deoxyribonucleotide)m = (deoxyribonucleotide)n+m + AMP + beta-nicotinamide D-nucleotide.. Catalyzes the formation of phosphodiester linkages between 5'-phosphoryl and 3'-hydroxyl groups in double-stranded DNA using NAD as a coenzyme and as the energy source for the reaction. This Escherichia coli O127:H6 (strain E2348/69 / EPEC) protein is DNA ligase B.